Reading from the N-terminus, the 478-residue chain is tRNA-2-methylthio-N(6)-dimethylallyladenosine synthase (478 aa).

In terms of domain architecture, MTTase N-terminal spans 39–157 (KLVFTQTFGC…FPQLLTESIN (119 aa)). Residues cysteine 48, cysteine 84, cysteine 118, cysteine 194, cysteine 198, and cysteine 201 each contribute to the [4Fe-4S] cluster site. The Radical SAM core domain maps to 180-410 (RKFELKAFVN…LEAVNRISAE (231 aa)). The TRAM domain occupies 410–477 (EINDGYKDRI…TFSLNGILVN (68 aa)).

The protein belongs to the methylthiotransferase family. MiaB subfamily. Monomer. [4Fe-4S] cluster serves as cofactor.

The protein localises to the cytoplasm. It carries out the reaction N(6)-dimethylallyladenosine(37) in tRNA + (sulfur carrier)-SH + AH2 + 2 S-adenosyl-L-methionine = 2-methylsulfanyl-N(6)-dimethylallyladenosine(37) in tRNA + (sulfur carrier)-H + 5'-deoxyadenosine + L-methionine + A + S-adenosyl-L-homocysteine + 2 H(+). Functionally, catalyzes the methylthiolation of N6-(dimethylallyl)adenosine (i(6)A), leading to the formation of 2-methylthio-N6-(dimethylallyl)adenosine (ms(2)i(6)A) at position 37 in tRNAs that read codons beginning with uridine. The chain is tRNA-2-methylthio-N(6)-dimethylallyladenosine synthase from Clostridioides difficile (strain 630) (Peptoclostridium difficile).